The chain runs to 270 residues: tRNA (guanine-N(1)-)-methyltransferase (270 aa).

S-adenosyl-L-methionine is bound by residues Gly117 and Ile137–Leu142.

Belongs to the RNA methyltransferase TrmD family. Homodimer.

It localises to the cytoplasm. The enzyme catalyses guanosine(37) in tRNA + S-adenosyl-L-methionine = N(1)-methylguanosine(37) in tRNA + S-adenosyl-L-homocysteine + H(+). Its function is as follows. Specifically methylates guanosine-37 in various tRNAs. The polypeptide is tRNA (guanine-N(1)-)-methyltransferase (Heliobacterium modesticaldum (strain ATCC 51547 / Ice1)).